The sequence spans 94 residues: uncharacterized protein (94 aa).

The disordered stretch occupies residues 1–22; sequence MATLQQAQQQNNQLTQQNNQLT. Residues 1–77 are a coiled coil; it reads MATLQQAQQQ…NRLHSENHRL (77 aa).

This is an uncharacterized protein from Acheta domesticus (House cricket).